The primary structure comprises 382 residues: Galactokinase (382 aa).

34-37 (EHTD) serves as a coordination point for substrate. 124–130 (GAGLSSS) serves as a coordination point for ATP. S130 and E162 together coordinate Mg(2+). Catalysis depends on D174, which acts as the Proton acceptor. Y223 is a binding site for substrate.

This sequence belongs to the GHMP kinase family. GalK subfamily.

It localises to the cytoplasm. The catalysed reaction is alpha-D-galactose + ATP = alpha-D-galactose 1-phosphate + ADP + H(+). Its pathway is carbohydrate metabolism; galactose metabolism. In terms of biological role, catalyzes the transfer of the gamma-phosphate of ATP to D-galactose to form alpha-D-galactose-1-phosphate (Gal-1-P). The chain is Galactokinase from Citrobacter koseri (strain ATCC BAA-895 / CDC 4225-83 / SGSC4696).